The chain runs to 130 residues: Small ribosomal subunit protein uS9 (130 aa).

The tract at residues 109–130 (RMKERKKYGLKGARRAPQFSKR) is disordered. The segment covering 111–130 (KERKKYGLKGARRAPQFSKR) has biased composition (basic residues).

Belongs to the universal ribosomal protein uS9 family.

This is Small ribosomal subunit protein uS9 from Listeria innocua serovar 6a (strain ATCC BAA-680 / CLIP 11262).